The following is a 151-amino-acid chain: uncharacterized protein (151 aa).

This is an uncharacterized protein from Saccharomyces cerevisiae (strain ATCC 204508 / S288c) (Baker's yeast).